A 733-amino-acid chain; its full sequence is Alpha,alpha-trehalose-phosphate synthase [UDP-forming] A (733 aa).

It in the N-terminal section; belongs to the glycosyltransferase 20 family. In the C-terminal section; belongs to the trehalose phosphatase family.

It carries out the reaction D-glucose 6-phosphate + UDP-alpha-D-glucose = alpha,alpha-trehalose 6-phosphate + UDP + H(+). Functionally, synthesizes trehalose 6-phosphate, the precursor for the production of trehalose, the main carbohydrate storage reserve of the dormant spore. Trehalose accumulates in both prestalk and prespore cells and then is rapidly metabolized during terminal differentiation of stalk cells, while being stored in spores, where it serves as the principal energy and carbon source for germination. This Dictyostelium discoideum (Social amoeba) protein is Alpha,alpha-trehalose-phosphate synthase [UDP-forming] A (tpsA).